Here is a 420-residue protein sequence, read N- to C-terminus: Glucose-1-phosphate adenylyltransferase (420 aa).

Alpha-D-glucose 1-phosphate is bound by residues Tyr-107, Gly-172, 187 to 188, and Ser-205; that span reads EK.

This sequence belongs to the bacterial/plant glucose-1-phosphate adenylyltransferase family. As to quaternary structure, homotetramer.

It carries out the reaction alpha-D-glucose 1-phosphate + ATP + H(+) = ADP-alpha-D-glucose + diphosphate. Its pathway is glycan biosynthesis; glycogen biosynthesis. In terms of biological role, involved in the biosynthesis of ADP-glucose, a building block required for the elongation reactions to produce glycogen. Catalyzes the reaction between ATP and alpha-D-glucose 1-phosphate (G1P) to produce pyrophosphate and ADP-Glc. This Rhodopseudomonas palustris (strain HaA2) protein is Glucose-1-phosphate adenylyltransferase.